A 356-amino-acid polypeptide reads, in one-letter code: Glutamine synthetase PR-1 (356 aa).

The region spanning 19-99 (VIAEYIWIGG…VICDAYTPAG (81 aa)) is the GS beta-grasp domain. The disordered stretch occupies residues 41-64 (PGPVKNPSELPKWNYDGSSTGQAP). One can recognise a GS catalytic domain in the interval 106-356 (KRHNAAKIFS…IADTTILWKP (251 aa)).

The protein belongs to the glutamine synthetase family. As to quaternary structure, homooctamer. As to expression, roots.

The protein localises to the cytoplasm. It carries out the reaction L-glutamate + NH4(+) + ATP = L-glutamine + ADP + phosphate + H(+). The protein is Glutamine synthetase PR-1 of Phaseolus vulgaris (Kidney bean).